Reading from the N-terminus, the 242-residue chain is MRCFKATIAYDGAYFLGYAKQPNKLGVQDKIESALNALGIKSVVVAAGRTDKGVHANNQVLSFYAQKHWNAAKLFYYLAPKLAPHVVLKKLEEKNFHARFDAQKRAYRYLLTKNLKTPFLAPYIACGDYGSLDALNTALKQFTGKHDFSMFKKEGGATTNPKRAIFNAFAYKTFIIGHECVVFKIIGDAFLRSSVRLIVQACVQYSLEKITLAEIQAQIHNIKATIRTPIMANGLYLHRVYY.

D51 functions as the Nucleophile in the catalytic mechanism. Substrate is bound at residue Y107.

Belongs to the tRNA pseudouridine synthase TruA family. In terms of assembly, homodimer.

The enzyme catalyses uridine(38/39/40) in tRNA = pseudouridine(38/39/40) in tRNA. In terms of biological role, formation of pseudouridine at positions 38, 39 and 40 in the anticodon stem and loop of transfer RNAs. This is tRNA pseudouridine synthase A from Helicobacter pylori (strain Shi470).